The primary structure comprises 42 residues: Photosystem I reaction center subunit IX (42 aa).

A helical membrane pass occupies residues 7–27 (YLSVAPVLSTLWFGSLAGLLI).

It belongs to the PsaJ family.

It is found in the plastid. The protein localises to the chloroplast thylakoid membrane. In terms of biological role, may help in the organization of the PsaE and PsaF subunits. The sequence is that of Photosystem I reaction center subunit IX from Lepidium virginicum (Virginia pepperweed).